The following is a 306-amino-acid chain: tRNA dimethylallyltransferase (306 aa).

ATP is bound at residue 2 to 9; the sequence is GPTASGKT. Residue 4–9 participates in substrate binding; the sequence is TASGKT. Interaction with substrate tRNA regions lie at residues 27-30 and 152-156; these read DSVQ and QRIVR.

This sequence belongs to the IPP transferase family. As to quaternary structure, monomer. It depends on Mg(2+) as a cofactor.

The catalysed reaction is adenosine(37) in tRNA + dimethylallyl diphosphate = N(6)-dimethylallyladenosine(37) in tRNA + diphosphate. Catalyzes the transfer of a dimethylallyl group onto the adenine at position 37 in tRNAs that read codons beginning with uridine, leading to the formation of N6-(dimethylallyl)adenosine (i(6)A). In Magnetococcus marinus (strain ATCC BAA-1437 / JCM 17883 / MC-1), this protein is tRNA dimethylallyltransferase.